A 967-amino-acid polypeptide reads, in one-letter code: Sodium/potassium exporting P-type ATPase 1 (967 aa).

Residues 1–70 (MEGSGDKRHE…GVNPWKILLR (70 aa)) are Cytoplasmic-facing. A helical transmembrane segment spans residues 71 to 91 (QVSNGLTAVLVVAMVVSFAVK). A topological domain (extracellular) is located at residue Asp92. Residues 93–113 (YAEAGVLVIVIAFNTIVGFVQ) traverse the membrane as a helical segment. The Cytoplasmic segment spans residues 114–254 (EYRAEKTMDA…TQSTPMQRKL (141 aa)). Residues 255–275 (NLMAYMLLAFALLLALIVFAV) form a helical membrane-spanning segment. The Extracellular portion of the chain corresponds to 276 to 283 (NKFNFSTE). A glycan (N-linked (GlcNAc...) asparagine) is linked at Asn279. The helical transmembrane segment at 284–304 (VVIYAIALSIAIIPEGLIAVI) threads the bilayer. Residues 305 to 732 (TIVQALGVRR…GRRIFSNIKK (428 aa)) lie on the Cytoplasmic side of the membrane. The active-site 4-aspartylphosphate intermediate is Asp340. Mg(2+) is bound by residues Asp340 and Thr342. ATP is bound by residues Thr342, Glu425, Lys478, Arg523, Thr587, Gly588, Asp589, Arg651, and Lys657. Asp676 contacts Mg(2+). Asn679 contributes to the ATP binding site. A helical membrane pass occupies residues 733-753 (FVLHLLSTNVGQVIVLLIGLA). The Extracellular segment spans residues 754-812 (FKDRTGTSVFPLSPVQILFLNLVTGTPPAMALGIEPASSSVMQVPPHVKGLFTVELIMD). A helical membrane pass occupies residues 813–833 (IFIFGTFIGILALASWVLVIY). Topologically, residues 834 to 900 (PFGNSDLATL…GGASRFFSNK (67 aa)) are cytoplasmic. Residues 901 to 921 (VLVASVFIGALLPIPTIYIGT) form a helical membrane-spanning segment. The Extracellular portion of the chain corresponds to 922 to 931 (LNTEVFKQEG). The helical transmembrane segment at 932–952 (ITWEWIIVIVSVFVFFLLSEF) threads the bilayer. The Cytoplasmic segment spans residues 953–967 (YKLLKRRFIKTPYNM).

This sequence belongs to the cation transport ATPase (P-type) (TC 3.A.3) family. Type IID subfamily. Requires Mg(2+) as cofactor. Post-translationally, the active site is phosphorylated in presence of sodium or potassium and in conditions of higher pH. Not phosphorylated in presence of calcium ions.

It is found in the cell membrane. It carries out the reaction Na(+)(in) + ATP + H2O = Na(+)(out) + ADP + phosphate + H(+). It catalyses the reaction K(+)(in) + ATP + H2O = K(+)(out) + ADP + phosphate + H(+). In terms of biological role, catalyzes the hydrolysis of ATP coupled with the export of sodium and potassium from the cell. May pump potassium inefficiently. May transport other cations such as lithium. Sodium/potassium efflux ATPases are involved in salt tolerance and maintaining the membrane potential across the plasma membrane in high salinity (Na+) or alkaline (K+) environments. The polypeptide is Sodium/potassium exporting P-type ATPase 1 (Physcomitrium patens (Spreading-leaved earth moss)).